A 458-amino-acid polypeptide reads, in one-letter code: Phosphoglucosamine mutase (458 aa).

S100 acts as the Phosphoserine intermediate in catalysis. Mg(2+) contacts are provided by S100, D239, D241, and D243. S100 is modified (phosphoserine).

It belongs to the phosphohexose mutase family. Requires Mg(2+) as cofactor. Post-translationally, activated by phosphorylation.

The catalysed reaction is alpha-D-glucosamine 1-phosphate = D-glucosamine 6-phosphate. Catalyzes the conversion of glucosamine-6-phosphate to glucosamine-1-phosphate. The chain is Phosphoglucosamine mutase from Dictyoglomus thermophilum (strain ATCC 35947 / DSM 3960 / H-6-12).